Here is a 225-residue protein sequence, read N- to C-terminus: Uracil-DNA glycosylase (225 aa).

Catalysis depends on aspartate 61, which acts as the Proton acceptor.

This sequence belongs to the uracil-DNA glycosylase (UDG) superfamily. UNG family.

The protein localises to the cytoplasm. The enzyme catalyses Hydrolyzes single-stranded DNA or mismatched double-stranded DNA and polynucleotides, releasing free uracil.. Its function is as follows. Excises uracil residues from the DNA which can arise as a result of misincorporation of dUMP residues by DNA polymerase or due to deamination of cytosine. The polypeptide is Uracil-DNA glycosylase (Actinobacillus pleuropneumoniae serotype 5b (strain L20)).